The primary structure comprises 202 residues: 3-isopropylmalate dehydratase small subunit (202 aa).

The protein belongs to the LeuD family. LeuD type 1 subfamily. As to quaternary structure, heterodimer of LeuC and LeuD.

It carries out the reaction (2R,3S)-3-isopropylmalate = (2S)-2-isopropylmalate. The protein operates within amino-acid biosynthesis; L-leucine biosynthesis; L-leucine from 3-methyl-2-oxobutanoate: step 2/4. Catalyzes the isomerization between 2-isopropylmalate and 3-isopropylmalate, via the formation of 2-isopropylmaleate. The sequence is that of 3-isopropylmalate dehydratase small subunit from Buchnera aphidicola subsp. Pemphigus spyrothecae.